A 450-amino-acid polypeptide reads, in one-letter code: Protein tweety homolog 1 (450 aa).

Topologically, residues 1–43 are extracellular; that stretch reads MGAPPGYRPSAWVHLLHQLPRADFQLRPVPSGFAPQEQEYQQA. A helical transmembrane segment spans residues 44–64; sequence LLLVAALAGLGLGLSLIFIAV. Residues 65–88 lie on the Cytoplasmic side of the membrane; it reads YLIRFCCCRPPEPPGSKTPSPGGG. A helical membrane pass occupies residues 89–109; it reads CVTWSCIVALLAGCIGIGIGF. The Extracellular segment spans residues 110-214; sequence YGNSETSDGV…DVSFVEEYRW (105 aa). An N-linked (GlcNAc...) asparagine glycan is attached at N130. The helical transmembrane segment at 215-235 threads the bilayer; the sequence is LAYVLLLLLELLVCLFTLLGL. The Cytoplasmic portion of the chain corresponds to 236-240; that stretch reads AKQSK. A helical membrane pass occupies residues 241–261; that stretch reads WLVIVMTVMSLLVLVLSWGSM. Residues 262–390 lie on the Extracellular side of the membrane; the sequence is GLEAATAVGL…LRGLCEDALE (129 aa). N284 and N355 each carry an N-linked (GlcNAc...) asparagine glycan. A disulfide bond links C303 and C370. Residues 391–411 form a helical membrane-spanning segment; it reads GLLFLLLFSLLSAGALATALC. Residues 412–450 lie on the Cytoplasmic side of the membrane; the sequence is SLPRAWALFPPSDDYDDTDDDDPFNPQESKRFVQWQSSI. Residues 428 to 450 are disordered; sequence DTDDDDPFNPQESKRFVQWQSSI. S440 carries the phosphoserine modification.

It belongs to the tweety family. Homotetramer; disulfide-linked. Homodimer. In terms of processing, N-glycosylated. Contains high-mannose, hybrid and complex oligosaccharides.

The protein localises to the cell membrane. The enzyme catalyses chloride(in) = chloride(out). It catalyses the reaction L-glutamate(out) = L-glutamate(in). In terms of biological role, calcium-independent, swelling-dependent volume-regulated anion channel (VRAC-swell) which plays a pivotal role in the process of regulatory volume decrease (RVD) in the brain through the efflux of anions like chloride and organic osmolytes like glutamate. This Macaca fascicularis (Crab-eating macaque) protein is Protein tweety homolog 1 (TTYH1).